A 364-amino-acid polypeptide reads, in one-letter code: tRNA 2-selenouridine synthase (364 aa).

A Rhodanese domain is found at 14-137 (LIADTPIIDV…LRQTAIQATI (124 aa)). Cysteine 97 serves as the catalytic S-selanylcysteine intermediate.

Belongs to the SelU family. Monomer.

The enzyme catalyses 5-methylaminomethyl-2-thiouridine(34) in tRNA + selenophosphate + (2E)-geranyl diphosphate + H2O + H(+) = 5-methylaminomethyl-2-selenouridine(34) in tRNA + (2E)-thiogeraniol + phosphate + diphosphate. The catalysed reaction is 5-methylaminomethyl-2-thiouridine(34) in tRNA + (2E)-geranyl diphosphate = 5-methylaminomethyl-S-(2E)-geranyl-thiouridine(34) in tRNA + diphosphate. It catalyses the reaction 5-methylaminomethyl-S-(2E)-geranyl-thiouridine(34) in tRNA + selenophosphate + H(+) = 5-methylaminomethyl-2-(Se-phospho)selenouridine(34) in tRNA + (2E)-thiogeraniol. It carries out the reaction 5-methylaminomethyl-2-(Se-phospho)selenouridine(34) in tRNA + H2O = 5-methylaminomethyl-2-selenouridine(34) in tRNA + phosphate. Involved in the post-transcriptional modification of the uridine at the wobble position (U34) of tRNA(Lys), tRNA(Glu) and tRNA(Gln). Catalyzes the conversion of 2-thiouridine (S2U-RNA) to 2-selenouridine (Se2U-RNA). Acts in a two-step process involving geranylation of 2-thiouridine (S2U) to S-geranyl-2-thiouridine (geS2U) and subsequent selenation of the latter derivative to 2-selenouridine (Se2U) in the tRNA chain. In Escherichia coli (strain SMS-3-5 / SECEC), this protein is tRNA 2-selenouridine synthase.